Here is a 72-residue protein sequence, read N- to C-terminus: MKVGIHPEYTAVKATCSCGNEFEFNSALGKDSIHLDVCDKCHPFYTGKQRIVDTGGRVDRFNKRFGAIGSKK.

The Zn(2+) site is built by C16, C18, C38, and C41.

This sequence belongs to the bacterial ribosomal protein bL31 family. Type A subfamily. As to quaternary structure, part of the 50S ribosomal subunit. Zn(2+) is required as a cofactor.

Its function is as follows. Binds the 23S rRNA. The chain is Large ribosomal subunit protein bL31 from Aliivibrio fischeri (strain ATCC 700601 / ES114) (Vibrio fischeri).